The chain runs to 458 residues: UDP-N-acetylmuramate--L-alanine ligase (458 aa).

112–118 (GTHGKTT) lines the ATP pocket.

The protein belongs to the MurCDEF family.

It localises to the cytoplasm. It catalyses the reaction UDP-N-acetyl-alpha-D-muramate + L-alanine + ATP = UDP-N-acetyl-alpha-D-muramoyl-L-alanine + ADP + phosphate + H(+). It functions in the pathway cell wall biogenesis; peptidoglycan biosynthesis. Cell wall formation. The polypeptide is UDP-N-acetylmuramate--L-alanine ligase (Geotalea daltonii (strain DSM 22248 / JCM 15807 / FRC-32) (Geobacter daltonii)).